We begin with the raw amino-acid sequence, 389 residues long: Succinate--CoA ligase [ADP-forming] subunit beta (389 aa).

In terms of domain architecture, ATP-grasp spans 9-244 (KQLLAEYGIP…KTQEDETEVT (236 aa)). ATP is bound by residues Lys46, 53–55 (GRG), Gly102, and Glu107. Residues Asn199 and Asp213 each coordinate Mg(2+). Substrate-binding positions include Asn264 and 321–323 (GIV).

It belongs to the succinate/malate CoA ligase beta subunit family. Heterotetramer of two alpha and two beta subunits. Requires Mg(2+) as cofactor.

It carries out the reaction succinate + ATP + CoA = succinyl-CoA + ADP + phosphate. The catalysed reaction is GTP + succinate + CoA = succinyl-CoA + GDP + phosphate. It participates in carbohydrate metabolism; tricarboxylic acid cycle; succinate from succinyl-CoA (ligase route): step 1/1. In terms of biological role, succinyl-CoA synthetase functions in the citric acid cycle (TCA), coupling the hydrolysis of succinyl-CoA to the synthesis of either ATP or GTP and thus represents the only step of substrate-level phosphorylation in the TCA. The beta subunit provides nucleotide specificity of the enzyme and binds the substrate succinate, while the binding sites for coenzyme A and phosphate are found in the alpha subunit. The protein is Succinate--CoA ligase [ADP-forming] subunit beta of Xanthomonas axonopodis pv. citri (strain 306).